The chain runs to 579 residues: Sulfite reductase [NADPH] hemoprotein beta-component (579 aa).

4 residues coordinate [4Fe-4S] cluster: C434, C440, C479, and C483. Residue C483 participates in siroheme binding.

It belongs to the nitrite and sulfite reductase 4Fe-4S domain family. In terms of assembly, alpha(8)-beta(8). The alpha component is a flavoprotein, the beta component is a hemoprotein. Requires siroheme as cofactor. [4Fe-4S] cluster is required as a cofactor.

The enzyme catalyses hydrogen sulfide + 3 NADP(+) + 3 H2O = sulfite + 3 NADPH + 4 H(+). Its pathway is sulfur metabolism; hydrogen sulfide biosynthesis; hydrogen sulfide from sulfite (NADPH route): step 1/1. In terms of biological role, component of the sulfite reductase complex that catalyzes the 6-electron reduction of sulfite to sulfide. This is one of several activities required for the biosynthesis of L-cysteine from sulfate. This chain is Sulfite reductase [NADPH] hemoprotein beta-component, found in Salmonella choleraesuis (strain SC-B67).